The chain runs to 345 residues: Fructose-1,6-bisphosphatase class 1 2 (345 aa).

The Mg(2+) site is built by Glu-90, Asp-109, Leu-111, and Asp-112. Substrate-binding positions include 112 to 115 (DGSS) and Asn-200. Glu-272 is a Mg(2+) binding site.

This sequence belongs to the FBPase class 1 family. As to quaternary structure, homotetramer. Mg(2+) is required as a cofactor.

It localises to the cytoplasm. It carries out the reaction beta-D-fructose 1,6-bisphosphate + H2O = beta-D-fructose 6-phosphate + phosphate. The protein operates within carbohydrate biosynthesis; gluconeogenesis. The polypeptide is Fructose-1,6-bisphosphatase class 1 2 (Nitrobacter hamburgensis (strain DSM 10229 / NCIMB 13809 / X14)).